The sequence spans 249 residues: Adenylate kinase (249 aa).

43–48 (GAGKGT) is a binding site for ATP. Positions 63-92 (ATGDMLRAQVAAKSALGVEAKKIMDQGGLV) are NMP. AMP is bound by residues threonine 64, arginine 69, 90-92 (GLV), 119-122 (GFPR), and glutamine 126. The interval 160 to 197 (GRLVHPASGRSYHKLFNPPKKDMIDDVSGDALVQRSDD) is LID. ATP contacts are provided by residues arginine 161 and 170-171 (SY). 2 residues coordinate AMP: arginine 194 and arginine 205. Glutamine 233 serves as a coordination point for ATP.

It belongs to the adenylate kinase family. AK2 subfamily. In terms of assembly, monomer.

The protein resides in the cytoplasm. It localises to the cytosol. The protein localises to the mitochondrion intermembrane space. The catalysed reaction is AMP + ATP = 2 ADP. Catalyzes the reversible transfer of the terminal phosphate group between ATP and AMP. Plays an important role in cellular energy homeostasis and in adenine nucleotide metabolism. Adenylate kinase activity is critical for regulation of the phosphate utilization and the AMP de novo biosynthesis pathways. The sequence is that of Adenylate kinase from Debaryomyces hansenii (strain ATCC 36239 / CBS 767 / BCRC 21394 / JCM 1990 / NBRC 0083 / IGC 2968) (Yeast).